A 228-amino-acid polypeptide reads, in one-letter code: Cytochrome c oxidase subunit 2 (228 aa).

At Met1–Ser14 the chain is on the mitochondrial intermembrane side. The chain crosses the membrane as a helical span at residues Pro15 to Met45. Topologically, residues Leu46–Gln59 are mitochondrial matrix. The helical transmembrane segment at Glu60–Met87 threads the bilayer. The Mitochondrial intermembrane portion of the chain corresponds to Asp88–Gln228. Residues His161, Cys196, Glu198, Cys200, His204, and Met207 each coordinate Cu cation. Glu198 contacts Mg(2+).

The protein belongs to the cytochrome c oxidase subunit 2 family. In terms of assembly, component of the cytochrome c oxidase (complex IV, CIV), a multisubunit enzyme composed of 14 subunits. The complex is composed of a catalytic core of 3 subunits MT-CO1, MT-CO2 and MT-CO3, encoded in the mitochondrial DNA, and 11 supernumerary subunits COX4I, COX5A, COX5B, COX6A, COX6B, COX6C, COX7A, COX7B, COX7C, COX8 and NDUFA4, which are encoded in the nuclear genome. The complex exists as a monomer or a dimer and forms supercomplexes (SCs) in the inner mitochondrial membrane with NADH-ubiquinone oxidoreductase (complex I, CI) and ubiquinol-cytochrome c oxidoreductase (cytochrome b-c1 complex, complex III, CIII), resulting in different assemblies (supercomplex SCI(1)III(2)IV(1) and megacomplex MCI(2)III(2)IV(2)). Found in a complex with TMEM177, COA6, COX18, COX20, SCO1 and SCO2. Interacts with TMEM177 in a COX20-dependent manner. Interacts with COX20. Interacts with COX16. It depends on Cu cation as a cofactor.

Its subcellular location is the mitochondrion inner membrane. It catalyses the reaction 4 Fe(II)-[cytochrome c] + O2 + 8 H(+)(in) = 4 Fe(III)-[cytochrome c] + 2 H2O + 4 H(+)(out). Functionally, component of the cytochrome c oxidase, the last enzyme in the mitochondrial electron transport chain which drives oxidative phosphorylation. The respiratory chain contains 3 multisubunit complexes succinate dehydrogenase (complex II, CII), ubiquinol-cytochrome c oxidoreductase (cytochrome b-c1 complex, complex III, CIII) and cytochrome c oxidase (complex IV, CIV), that cooperate to transfer electrons derived from NADH and succinate to molecular oxygen, creating an electrochemical gradient over the inner membrane that drives transmembrane transport and the ATP synthase. Cytochrome c oxidase is the component of the respiratory chain that catalyzes the reduction of oxygen to water. Electrons originating from reduced cytochrome c in the intermembrane space (IMS) are transferred via the dinuclear copper A center (CU(A)) of subunit 2 and heme A of subunit 1 to the active site in subunit 1, a binuclear center (BNC) formed by heme A3 and copper B (CU(B)). The BNC reduces molecular oxygen to 2 water molecules using 4 electrons from cytochrome c in the IMS and 4 protons from the mitochondrial matrix. In Meriones shawi (Shaw's jird), this protein is Cytochrome c oxidase subunit 2 (MT-CO2).